The sequence spans 197 residues: Protein GrpE (197 aa).

The interval 1-40 (MSSKEQKTPEGQAPEEIIMDQHEEIEAVEPEASAEQVDPR) is disordered.

It belongs to the GrpE family. In terms of assembly, homodimer.

Its subcellular location is the cytoplasm. Its function is as follows. Participates actively in the response to hyperosmotic and heat shock by preventing the aggregation of stress-denatured proteins, in association with DnaK and GrpE. It is the nucleotide exchange factor for DnaK and may function as a thermosensor. Unfolded proteins bind initially to DnaJ; upon interaction with the DnaJ-bound protein, DnaK hydrolyzes its bound ATP, resulting in the formation of a stable complex. GrpE releases ADP from DnaK; ATP binding to DnaK triggers the release of the substrate protein, thus completing the reaction cycle. Several rounds of ATP-dependent interactions between DnaJ, DnaK and GrpE are required for fully efficient folding. The sequence is that of Protein GrpE from Escherichia coli (strain K12 / DH10B).